Consider the following 860-residue polypeptide: Leucine--tRNA ligase (860 aa).

Residues 42 to 52 (PYPSGRLHMGH) carry the 'HIGH' region motif. Residues 619–623 (KMSKS) carry the 'KMSKS' region motif. An ATP-binding site is contributed by Lys-622.

Belongs to the class-I aminoacyl-tRNA synthetase family.

The protein localises to the cytoplasm. It carries out the reaction tRNA(Leu) + L-leucine + ATP = L-leucyl-tRNA(Leu) + AMP + diphosphate. This Mannheimia succiniciproducens (strain KCTC 0769BP / MBEL55E) protein is Leucine--tRNA ligase.